A 100-amino-acid polypeptide reads, in one-letter code: Urease subunit gamma (100 aa).

This sequence belongs to the urease gamma subunit family. In terms of assembly, heterotrimer of UreA (gamma), UreB (beta) and UreC (alpha) subunits. Three heterotrimers associate to form the active enzyme.

It is found in the cytoplasm. It catalyses the reaction urea + 2 H2O + H(+) = hydrogencarbonate + 2 NH4(+). It functions in the pathway nitrogen metabolism; urea degradation; CO(2) and NH(3) from urea (urease route): step 1/1. The chain is Urease subunit gamma from Streptomyces coelicolor (strain ATCC BAA-471 / A3(2) / M145).